The primary structure comprises 304 residues: Murein tetrapeptide carboxypeptidase (304 aa).

Catalysis depends on Ser-106, which acts as the Nucleophile. Active-site charge relay system residues include Glu-200 and His-270.

It belongs to the peptidase S66 family.

It is found in the cytoplasm. The enzyme catalyses N-acetyl-D-glucosaminyl-N-acetylmuramoyl-L-alanyl-meso-2,6-diaminoheptanedioyl-D-alanine + H2O = N-acetyl-D-glucosaminyl-N-acetylmuramoyl-L-alanyl-meso-2,6-diaminoheptanedioate + D-alanine. The protein operates within cell wall biogenesis; peptidoglycan recycling. Functionally, releases the terminal D-alanine residue from the cytoplasmic tetrapeptide recycling product L-Ala-gamma-D-Glu-meso-Dap-D-Ala. Can also cleave D-Ala from murein derivatives containing the tetrapeptide, i.e. MurNAc-tetrapeptide, UDP-MurNAc-tetrapeptide, GlcNAc-MurNAc-tetrapeptide, and GlcNAc-anhMurNAc-tetrapeptide. Does not act on murein sacculi or cross-linked muropeptides. The tripeptides produced by the LcdA reaction can then be reused as peptidoglycan building blocks; LcdA is thereby involved in murein recycling. The protein is Murein tetrapeptide carboxypeptidase (ldcA) of Escherichia coli O157:H7.